The following is a 413-amino-acid chain: uncharacterized protein (413 aa).

Helical transmembrane passes span 22–42 (VLLV…TLIL), 270–290 (IIYV…ISIC), 312–332 (ILIQ…GNLI), and 379–399 (LIII…YPIY).

The protein belongs to the ABC-4 integral membrane protein family. LolC/E subfamily.

It is found in the cell membrane. This is an uncharacterized protein from Buchnera aphidicola subsp. Schizaphis graminum (strain Sg).